Consider the following 1141-residue polypeptide: LRR receptor-like serine/threonine-protein kinase RGI1 (1141 aa).

An N-terminal signal peptide occupies residues 1 to 33 (MSLHSLIFFSSSSSSLLFSFFFIFIFCFSLSDA). The Extracellular segment spans residues 34–726 (EQNPEASILY…DASRTRKLRL (693 aa)). A disulfide bond links Cys69 and Cys77. An N-linked (GlcNAc...) asparagine glycan is attached at Asn71. LRR repeat units lie at residues 80-104 (QGFI…LPAF), 105-128 (RSLQ…LGDC), 130-152 (GLKV…LSKL), 153-176 (RNLE…ISKC), 178-200 (KLKS…LGKL), 202-225 (GLEV…IGDC), 226-249 (SNLT…LGKL), 250-273 (KKLE…LGNC), 275-297 (ELVD…IGQL), 298-321 (TKLE…IGNC), 322-345 (SNLK…IGRL), 347-369 (FLEE…ISNC), 370-392 (SSLV…ELGT), 394-417 (TKLT…LADC), 418-441 (TDLQ…LFML), 443-464 (NLTK…EIGN), 465-489 (CSSL…IGSL), 490-513 (KKIN…IGSC), 514-537 (SELQ…VSSL), 538-561 (SGLQ…LGRL), 563-585 (SLNK…LGMC), 586-609 (SGLQ…LGDI), 610-634 (ENLE…IASL), 636-657 (KLSI…LANI), and 658-682 (ENLV…LFRQ). Asn116 is a glycosylation site (N-linked (GlcNAc...) asparagine). Short sequence motifs (small peptide recognition) lie at residues 185-186 (FD) and 207-210 (RIGG). A glycan (N-linked (GlcNAc...) asparagine) is linked at Asn227. Short sequence motifs (small peptide recognition) lie at residues 230–235 (VLGLAE) and Tyr258. Asn272 carries an N-linked (GlcNAc...) asparagine glycan. A Small peptide recognition motif is present at residues 280-282 (FLY). N-linked (GlcNAc...) asparagine glycosylation is present at Asn320. Short sequence motifs (small peptide recognition) lie at residues 328 to 331 (DLSL) and 350 to 352 (EFM). Asn368 carries an N-linked (GlcNAc...) asparagine glycan. Short sequence motifs (small peptide recognition) lie at residues 398-402 (LFFAW) and 424-427 (DLSR). N-linked (GlcNAc...) asparagine glycosylation occurs at Asn443. Positions 446 to 450 (KLLLI) match the Small peptide recognition motif. Residue Asn464 is glycosylated (N-linked (GlcNAc...) asparagine). The short motif at 470–472 (RLR) is the Small peptide recognition element. Asn523 carries N-linked (GlcNAc...) asparagine glycosylation. N-linked (GlcNAc...) asparagine glycosylation is present at Asn617. Residue Asn664 is glycosylated (N-linked (GlcNAc...) asparagine). The chain crosses the membrane as a helical span at residues 727 to 747 (TLALLITLTVVLMILGAVAVI). Residues 748 to 1141 (RARRNIDNER…LLYSSSSSIE (394 aa)) are Cytoplasmic-facing. The Protein kinase domain occupies 786-1074 (LVEPNVIGKG…EIKQEREEYA (289 aa)). Residues 792–800 (IGKGCSGVV) and Lys814 contribute to the ATP site. Phosphotyrosine is present on residues Tyr868 and Tyr906. Catalysis depends on Asp919, which acts as the Proton acceptor. Tyr962 and Tyr969 each carry phosphotyrosine.

This sequence belongs to the protein kinase superfamily. Ser/Thr protein kinase family. As to quaternary structure, interacts with beet curly top virus AL4/C4. Binds to RGF peptides such as RGF1, GLV5/CLEL1/RGF2, GLV7/CLEL3/RGF3, GLV3/RGF4, GLV10/CLEL7/RGF5 and RGF10/CLELN; these interactions trigger the formation of heterodimers with SERK1, SERK2 or BAK1/SERK3 via LRR regions. Interacts with UBP13. Post-translationally, phosphorylated and ubiquitinated upon interaction with RGF1, thus leading to activation a subsequent degradation. Stabilized by UBP12 and UBP13-mediated deubiquitination. Autophosphorylated. As to expression, expressed in roots.

It localises to the cell membrane. It carries out the reaction L-seryl-[protein] + ATP = O-phospho-L-seryl-[protein] + ADP + H(+). It catalyses the reaction L-threonyl-[protein] + ATP = O-phospho-L-threonyl-[protein] + ADP + H(+). Together with RGI2, RGI3, RGI4 and RGI5, acts as a receptor of RGF peptides (e.g. RGF1, GLV5/CLEL1/RGF2, GLV7/CLEL3/RGF3, GLV3/RGF4, GLV10/CLEL7/RGF5 and RGF10/CLELN), peptide hormones which maintain the postembryonic root stem cell niche by regulating the expression levels and patterns of the transcription factor PLETHORA (PLT, e.g. PLT1 and PLT2). Links RGF peptides signal with their downstream components. The sequence is that of LRR receptor-like serine/threonine-protein kinase RGI1 from Arabidopsis thaliana (Mouse-ear cress).